Here is a 212-residue protein sequence, read N- to C-terminus: 3-isopropylmalate dehydratase small subunit (212 aa).

It belongs to the LeuD family. LeuD type 1 subfamily. Heterodimer of LeuC and LeuD.

The catalysed reaction is (2R,3S)-3-isopropylmalate = (2S)-2-isopropylmalate. It participates in amino-acid biosynthesis; L-leucine biosynthesis; L-leucine from 3-methyl-2-oxobutanoate: step 2/4. Catalyzes the isomerization between 2-isopropylmalate and 3-isopropylmalate, via the formation of 2-isopropylmaleate. The sequence is that of 3-isopropylmalate dehydratase small subunit from Pseudomonas aeruginosa (strain LESB58).